The sequence spans 283 residues: Shikimate kinase (283 aa).

86–96 (PIKSGLSSSSA) is a binding site for ATP.

This sequence belongs to the GHMP kinase family. Archaeal shikimate kinase subfamily.

It is found in the cytoplasm. It carries out the reaction shikimate + ATP = 3-phosphoshikimate + ADP + H(+). It participates in metabolic intermediate biosynthesis; chorismate biosynthesis; chorismate from D-erythrose 4-phosphate and phosphoenolpyruvate: step 5/7. This is Shikimate kinase from Methanococcus maripaludis (strain C5 / ATCC BAA-1333).